We begin with the raw amino-acid sequence, 449 residues long: Putative tartrate transporter (449 aa).

11 helical membrane passes run I34–F54, G64–F84, I99–Q119, L130–F150, A156–I176, W194–L214, V259–W279, I292–W312, G336–V356, L367–I387, and G414–A434.

The protein belongs to the major facilitator superfamily. Phthalate permease family.

The protein localises to the cell membrane. Functionally, component of the tartrate utilization system and may allow entry of tartrate and tartrate dehydrogenase. In Agrobacterium vitis (Rhizobium vitis), this protein is Putative tartrate transporter (ttuB).